The sequence spans 120 residues: Large ribosomal subunit protein uL18 (120 aa).

The protein belongs to the universal ribosomal protein uL18 family. In terms of assembly, part of the 50S ribosomal subunit; part of the 5S rRNA/L5/L18/L25 subcomplex. Contacts the 5S and 23S rRNAs.

Its function is as follows. This is one of the proteins that bind and probably mediate the attachment of the 5S RNA into the large ribosomal subunit, where it forms part of the central protuberance. The sequence is that of Large ribosomal subunit protein uL18 from Picosynechococcus sp. (strain ATCC 27264 / PCC 7002 / PR-6) (Agmenellum quadruplicatum).